We begin with the raw amino-acid sequence, 226 residues long: ATP synthase subunit a (226 aa).

7 helical membrane passes run 18 to 38 (FIIGFHTLLVAVILLILARYA), 44 to 64 (VVPSGIQNVFEFIISGIISFA), 79 to 99 (LAATIAFLVFFGNAIGIIPGF), 105 to 125 (SWSFTLVLALVVFFYYHFEGI), 137 to 157 (FMGPVWWLAPLMFPVEIISHF), 177 to 197 (FLLVMLMLAPWIVPVAPFAIL), and 202 to 222 (LLQAFVFMILTYVYIHGAVVV).

This sequence belongs to the ATPase A chain family. F-type ATPases have 2 components, CF(1) - the catalytic core - and CF(0) - the membrane proton channel. CF(1) has five subunits: alpha(3), beta(3), gamma(1), delta(1), epsilon(1). CF(0) has three main subunits: a(1), b(2) and c(9-12). The alpha and beta chains form an alternating ring which encloses part of the gamma chain. CF(1) is attached to CF(0) by a central stalk formed by the gamma and epsilon chains, while a peripheral stalk is formed by the delta and b chains.

Its subcellular location is the cell inner membrane. Functionally, key component of the proton channel; it plays a direct role in the translocation of protons across the membrane. The sequence is that of ATP synthase subunit a from Helicobacter hepaticus (strain ATCC 51449 / 3B1).